The following is a 422-amino-acid chain: Aminopentol aminotransferase (422 aa).

Lys-258 is subject to N6-(pyridoxal phosphate)lysine.

The protein belongs to the class-III pyridoxal-phosphate-dependent aminotransferase family. It depends on pyridoxal 5'-phosphate as a cofactor.

It is found in the cytoplasm. The catalysed reaction is (2S,3S,5R,10R,12S,14S,15R,16R)-2-amino-12,16-dimethylicosane-3,5,10,14,15-pentol + pyruvate = (3S,5R,10R,12S,14S,15R,16R)-3,5,10,14,15-pentahydroxy-12,16-dimethylicosan-2-one + L-alanine. Involved in degradation of fumonisin B1. Catalyzes the deamination of aminopentol (HFB1) to 2-keto-HFB1. Pyruvate is the preferred cosubstrate, but it can also use several other alpha-keto acids as amino group acceptors. The chain is Aminopentol aminotransferase (fumI) from Sphingopyxis macrogoltabida (Sphingomonas macrogoltabidus).